We begin with the raw amino-acid sequence, 1824 residues long: Treslin (1824 aa).

Disordered stretches follow at residues 542-572 (EFYQ…QKMK), 590-622 (AQKT…KPGL), 907-973 (SPSK…SGES), 1001-1035 (RHSS…KGKF), 1098-1117 (AVGC…VGDN), 1189-1221 (VPEN…SPEE), 1293-1388 (PFCN…DDDK), 1459-1518 (FEGK…QSSP), 1617-1650 (TPTH…NLNS), and 1803-1824 (PLCQ…KLLD). The span at 546–555 (SSTAGSSGSL) shows a compositional bias: low complexity. Over residues 562 to 572 (TQCTPVRQKMK) the composition is skewed to polar residues. Basic and acidic residues predominate over residues 605–619 (GTEKGGKKSSGDRTK). Positions 907-921 (SPSKKSKMPRSQSVS) are enriched in polar residues. Over residues 932–952 (SDVDNDDRHTLLTKKVSETPL) the composition is skewed to basic and acidic residues. Composition is skewed to polar residues over residues 1005-1014 (VFYSSSQPRS) and 1103-1114 (TPQSPRTPNRTV). Positions 1319–1345 (RSGNTPVKESCSPSSNSQGITGTSPSP) are enriched in polar residues. The span at 1347-1370 (KSLSSAVAKSSPSPSFGPSRSGVG) shows a compositional bias: low complexity. A compositionally biased stretch (polar residues) spans 1462–1472 (KQTTSTGTPLT). Positions 1480–1490 (TPDRRQREAEA) are enriched in basic and acidic residues. Composition is skewed to polar residues over residues 1617 to 1629 (TPTH…QSPL) and 1636 to 1650 (SPQS…NLNS). A compositionally biased stretch (basic residues) spans 1807 to 1824 (PRRRRTPSRTYSRKKLLD).

The protein belongs to the treslin family. In terms of assembly, interacts with topbp1 (via BRCT domains); interaction takes place in a cdk2-dependent manner. Component of the replisome complex.

It is found in the nucleus. Functionally, regulator of DNA replication and S/M and G2/M checkpoints. Regulates the triggering of DNA replication initiation via its interaction with topbp1 by participating in cdk2-mediated loading of cdc45l onto replication origins. Required for the transition from pre-replication complex (pre-RC) to pre-initiation complex (pre-IC). Required to prevent mitotic entry after treatment with ionizing radiation. The sequence is that of Treslin (ticrr) from Danio rerio (Zebrafish).